A 401-amino-acid chain; its full sequence is MDTKAFTRALKKSENYNRQGFGHAQEVATLMQSAYKSNLIQQIRENNYTLQRGEVTIKLAKTFGFCWGVERSVAMAYETRQHFPNQQIWISYELIHNPSVNQDMKDMEIKFIPVIDGQKDFSVAGNNDVVILPAFGASVQEMQILKDKNCQIVDTTCPWVSKVWNSIEKHKKKKFTSIIHGKYSHAETIATSSFADKYLIVLNMTQAQYVCNYILNGGNRDEFLAKFKQAYSEGFDPDLDLEQVGIANQTTMLKTETEEIGKLFERTMMKKYRPDQLNAHYQNFNTICDATQERQDAIAGLFNEKLDLMVVIGGFNSSNTTHLQEMAIENGIPSYHIDGAQRILSRNKIEHKPLGREVKISEGWLPEGPVVVGLTSGASTPDQAVEDTINKIVAMKLVVMN.

Cys-66 contacts [4Fe-4S] cluster. His-96 is a binding site for (2E)-4-hydroxy-3-methylbut-2-enyl diphosphate. His-96 lines the dimethylallyl diphosphate pocket. Isopentenyl diphosphate is bound at residue His-96. Cys-157 contributes to the [4Fe-4S] cluster binding site. Residue His-185 coordinates (2E)-4-hydroxy-3-methylbut-2-enyl diphosphate. His-185 serves as a coordination point for dimethylallyl diphosphate. Residue His-185 coordinates isopentenyl diphosphate. The Proton donor role is filled by Glu-187. Thr-250 lines the (2E)-4-hydroxy-3-methylbut-2-enyl diphosphate pocket. Residue Cys-288 coordinates [4Fe-4S] cluster. Residues Ser-317, Ser-318, Asn-319, and Ser-379 each coordinate (2E)-4-hydroxy-3-methylbut-2-enyl diphosphate. 4 residues coordinate dimethylallyl diphosphate: Ser-317, Ser-318, Asn-319, and Ser-379. Residues Ser-317, Ser-318, Asn-319, and Ser-379 each contribute to the isopentenyl diphosphate site.

This sequence belongs to the IspH family. Requires [4Fe-4S] cluster as cofactor.

The catalysed reaction is isopentenyl diphosphate + 2 oxidized [2Fe-2S]-[ferredoxin] + H2O = (2E)-4-hydroxy-3-methylbut-2-enyl diphosphate + 2 reduced [2Fe-2S]-[ferredoxin] + 2 H(+). It catalyses the reaction dimethylallyl diphosphate + 2 oxidized [2Fe-2S]-[ferredoxin] + H2O = (2E)-4-hydroxy-3-methylbut-2-enyl diphosphate + 2 reduced [2Fe-2S]-[ferredoxin] + 2 H(+). Its pathway is isoprenoid biosynthesis; dimethylallyl diphosphate biosynthesis; dimethylallyl diphosphate from (2E)-4-hydroxy-3-methylbutenyl diphosphate: step 1/1. It participates in isoprenoid biosynthesis; isopentenyl diphosphate biosynthesis via DXP pathway; isopentenyl diphosphate from 1-deoxy-D-xylulose 5-phosphate: step 6/6. Its function is as follows. Catalyzes the conversion of 1-hydroxy-2-methyl-2-(E)-butenyl 4-diphosphate (HMBPP) into a mixture of isopentenyl diphosphate (IPP) and dimethylallyl diphosphate (DMAPP). Acts in the terminal step of the DOXP/MEP pathway for isoprenoid precursor biosynthesis. The chain is 4-hydroxy-3-methylbut-2-enyl diphosphate reductase from Trichodesmium erythraeum (strain IMS101).